The sequence spans 311 residues: Terpentetriene synthase (311 aa).

The DDXXD motif motif lies at 77-81 (DDRWD).

The protein belongs to the terpene synthase family. As to quaternary structure, homodimer. It depends on Mg(2+) as a cofactor.

The enzyme catalyses terpentedienyl diphosphate = terpentetriene + diphosphate. It functions in the pathway antibiotic biosynthesis. In terms of biological role, involved in the production of the isoprenoid antibiotic terpentecin. Converts terpentedienol diphosphate (TDP) into terpentetriene (TTE). Can also accept geranylgeranyl diphosphate (GGDP) and farnesyl diphosphate (FDP) as substrates. The chain is Terpentetriene synthase (cyc2) from Kitasatospora griseola (Streptomyces griseolosporeus).